Reading from the N-terminus, the 89-residue chain is Small ribosomal subunit protein uS15 (89 aa).

Belongs to the universal ribosomal protein uS15 family. Part of the 30S ribosomal subunit. Forms a bridge to the 50S subunit in the 70S ribosome, contacting the 23S rRNA.

In terms of biological role, one of the primary rRNA binding proteins, it binds directly to 16S rRNA where it helps nucleate assembly of the platform of the 30S subunit by binding and bridging several RNA helices of the 16S rRNA. Its function is as follows. Forms an intersubunit bridge (bridge B4) with the 23S rRNA of the 50S subunit in the ribosome. The chain is Small ribosomal subunit protein uS15 from Halalkalibacterium halodurans (strain ATCC BAA-125 / DSM 18197 / FERM 7344 / JCM 9153 / C-125) (Bacillus halodurans).